Here is an 801-residue protein sequence, read N- to C-terminus: Phenylalanine--tRNA ligase beta subunit (801 aa).

In terms of domain architecture, tRNA-binding spans 39 to 154 (LKMPQKVVVG…GHLELGVELG (116 aa)). The region spanning 398 to 475 (IDEITIKTTF…RIYGIDNVSS (78 aa)) is the B5 domain. Mg(2+) contacts are provided by Asp453, Asp459, Glu462, and Glu463. One can recognise an FDX-ACB domain in the interval 708-800 (SKYQKSTRDL…LVREFDAVLR (93 aa)).

The protein belongs to the phenylalanyl-tRNA synthetase beta subunit family. Type 1 subfamily. As to quaternary structure, tetramer of two alpha and two beta subunits. Mg(2+) is required as a cofactor.

The protein localises to the cytoplasm. The enzyme catalyses tRNA(Phe) + L-phenylalanine + ATP = L-phenylalanyl-tRNA(Phe) + AMP + diphosphate + H(+). In Helicobacter hepaticus (strain ATCC 51449 / 3B1), this protein is Phenylalanine--tRNA ligase beta subunit.